A 151-amino-acid chain; its full sequence is uncharacterized protein (151 aa).

The disordered stretch occupies residues 1–24; it reads MHAKTKKLGTDTSYKRPQVTAQEQ.

This is an uncharacterized protein from Acanthamoeba polyphaga mimivirus (APMV).